A 421-amino-acid chain; its full sequence is NAD-specific glutamate dehydrogenase (421 aa).

Residues K70 and K94 each coordinate substrate. K106 serves as the catalytic Proton donor. T191 and N222 together coordinate NAD(+). S355 contributes to the substrate binding site.

Belongs to the Glu/Leu/Phe/Val dehydrogenases family. As to quaternary structure, homohexamer.

The enzyme catalyses L-glutamate + NAD(+) + H2O = 2-oxoglutarate + NH4(+) + NADH + H(+). Its pathway is amino-acid degradation; L-glutamate degradation via hydroxyglutarate pathway; crotonoyl-CoA from L-glutamate: step 1/5. The chain is NAD-specific glutamate dehydrogenase from Peptoniphilus asaccharolyticus (Peptostreptococcus asaccharolyticus).